Consider the following 334-residue polypeptide: Large ribosomal subunit protein uL3 (334 aa).

Over residues 1-10 (MGMKKNRPRR) the composition is skewed to basic residues. The interval 1–21 (MGMKKNRPRRGSLAFSPRKRA) is disordered.

The protein belongs to the universal ribosomal protein uL3 family. In terms of assembly, part of the 50S ribosomal subunit. Forms a cluster with proteins L14 and L24e.

Functionally, one of the primary rRNA binding proteins, it binds directly near the 3'-end of the 23S rRNA, where it nucleates assembly of the 50S subunit. This chain is Large ribosomal subunit protein uL3, found in Methanococcus vannielii (strain ATCC 35089 / DSM 1224 / JCM 13029 / OCM 148 / SB).